Here is a 541-residue protein sequence, read N- to C-terminus: Valine N-monooxygenase 2 (541 aa).

The Cytoplasmic segment spans residues 1–18 (MAMNVSTTATTTASFAST). A helical transmembrane segment spans residues 19 to 41 (SSMNNTAKILLITLFISIVSTVI). At 42 to 541 (KLQKRASYKK…LAPHLYPTSP (500 aa)) the chain is on the lumenal side. N-linked (GlcNAc...) asparagine glycosylation is present at N277. Position 477 (C477) interacts with heme. An N-linked (GlcNAc...) asparagine glycan is attached at N505.

Belongs to the cytochrome P450 family. Heme serves as cofactor. As to expression, expressed in the epidermis, the next two cortex cell layers, the endodermis and the pericycle of leaf petioles. Strong expression around the laticifers among the phloem cells and in parenchymatic cells between the protoxylem and the metaxylem cells. In the leaves, preferentially expressed in the mesophyll cells adjacent to the epidermis.

Its subcellular location is the microsome membrane. The enzyme catalyses L-valine + 2 reduced [NADPH--hemoprotein reductase] + 2 O2 = (E)-2-methylpropanal oxime + 2 oxidized [NADPH--hemoprotein reductase] + CO2 + 3 H2O + 2 H(+). It catalyses the reaction L-valine + reduced [NADPH--hemoprotein reductase] + O2 = N-hydroxy-L-valine + oxidized [NADPH--hemoprotein reductase] + H2O + 2 H(+). It carries out the reaction N-hydroxy-L-valine + reduced [NADPH--hemoprotein reductase] + O2 = N,N-dihydroxy-L-valine + oxidized [NADPH--hemoprotein reductase] + H2O + H(+). The catalysed reaction is L-isoleucine + 2 reduced [NADPH--hemoprotein reductase] + 2 O2 = (1E,2S)-2-methylbutanal oxime + 2 oxidized [NADPH--hemoprotein reductase] + CO2 + 3 H2O + 2 H(+). The enzyme catalyses L-isoleucine + reduced [NADPH--hemoprotein reductase] + O2 = N-hydroxy-L-isoleucine + oxidized [NADPH--hemoprotein reductase] + H2O + 2 H(+). It catalyses the reaction N-hydroxy-L-isoleucine + reduced [NADPH--hemoprotein reductase] + O2 = N,N-dihydroxy-L-isoleucine + oxidized [NADPH--hemoprotein reductase] + H2O + H(+). Its function is as follows. Involved in the biosynthesis of the cyanogenic glucosides linamarin and lotaustralin. Can use L-valine or L-isoleucine as substrate. Catalyzes multi-step reactions starting with two successive N-hydroxylations using L-valine and L-isoleucine as substrates leading to the formation of N,N-dihydroxy-L-valine and N,N-dihydroxy-L-isoleucine, respectively; following spontaneous reactions lead to the production of (E)-2-methylpropanal oxime and (1E,2S)-2-methylbutanal oxime, respectively. In Manihot esculenta (Cassava), this protein is Valine N-monooxygenase 2.